The following is a 1183-amino-acid chain: Chromosome partition protein Smc (1183 aa).

ATP is bound at residue 32 to 39 (PNGSGKSN). A coiled-coil region spans residues 162 to 483 (EEAAGIKKLQ…KLSQDIREFE (322 aa)). Residues 519-632 (SGIDGVLISL…VENIDIATDI (114 aa)) enclose the SMC hinge domain. Residues 666–1019 (INQIFERKKE…VMDLIQEIDE (354 aa)) are a coiled coil.

The protein belongs to the SMC family. In terms of assembly, homodimer.

The protein resides in the cytoplasm. Its function is as follows. Required for chromosome condensation and partitioning. The polypeptide is Chromosome partition protein Smc (Fusobacterium nucleatum subsp. nucleatum (strain ATCC 25586 / DSM 15643 / BCRC 10681 / CIP 101130 / JCM 8532 / KCTC 2640 / LMG 13131 / VPI 4355)).